We begin with the raw amino-acid sequence, 826 residues long: Disintegrin and metalloproteinase domain-containing protein 8 (826 aa).

The N-terminal stretch at 1–16 (MLGLWLLSVLWTPAVA) is a signal peptide. At 17-658 (PGPPLPHVKQ…VSDEQAASTS (642 aa)) the chain is on the extracellular side. 2 N-linked (GlcNAc...) asparagine glycosylation sites follow: asparagine 89 and asparagine 260. Positions 196–395 (RYVELYVVAD…PQTGCLTNVP (200 aa)) constitute a Peptidase M12B domain. 12 cysteine pairs are disulfide-bonded: cysteine 305–cysteine 390, cysteine 346–cysteine 374, cysteine 348–cysteine 357, cysteine 430–cysteine 452, cysteine 443–cysteine 449, cysteine 461–cysteine 481, cysteine 468–cysteine 498, cysteine 493–cysteine 503, cysteine 563–cysteine 615, cysteine 615–cysteine 625, cysteine 619–cysteine 631, and cysteine 633–cysteine 642. Histidine 329 contacts Zn(2+). Glutamate 330 is a catalytic residue. Residues histidine 333 and histidine 339 each contribute to the Zn(2+) site. Residues 403-489 (GPVCGNLFVE…TCPEDAFQQN (87 aa)) form the Disintegrin domain. Residue asparagine 431 is glycosylated (N-linked (GlcNAc...) asparagine). Residues 611 to 643 (RSENCSAKCNNHGVCNHKRECHCHKGWAPPNCV) form the EGF-like domain. A glycan (N-linked (GlcNAc...) asparagine) is linked at asparagine 614. A helical membrane pass occupies residues 659-683 (LPVSVVVVLVILVAAMVIVAGIVIY). The Cytoplasmic portion of the chain corresponds to 684 to 826 (RKAPRQIQRR…VALKVPIQKR (143 aa)). Positions 701–826 (SGLSNPLFYT…VALKVPIQKR (126 aa)) are disordered. Residues 733–748 (PPRPIVKPKRPPPAPP) show a composition bias toward pro residues. Low complexity predominate over residues 749–763 (GAVSSSPLPVPVYAP).

In terms of assembly, interacts with FST3. Zn(2+) serves as cofactor. Macrophages.

Its subcellular location is the membrane. In terms of biological role, possible involvement in extravasation of leukocytes. The sequence is that of Disintegrin and metalloproteinase domain-containing protein 8 (Adam8) from Mus musculus (Mouse).